Here is a 211-residue protein sequence, read N- to C-terminus: Histidine biosynthesis bifunctional protein HisIE (211 aa).

The interval 1–118 (MNVDDLTFDD…IYGASDRFGI (118 aa)) is phosphoribosyl-AMP cyclohydrolase. The segment at 119–211 (IATLEALIAE…LEERHRPKEE (93 aa)) is phosphoribosyl-ATP pyrophosphohydrolase.

In the N-terminal section; belongs to the PRA-CH family. The protein in the C-terminal section; belongs to the PRA-PH family.

The protein resides in the cytoplasm. It carries out the reaction 1-(5-phospho-beta-D-ribosyl)-ATP + H2O = 1-(5-phospho-beta-D-ribosyl)-5'-AMP + diphosphate + H(+). The enzyme catalyses 1-(5-phospho-beta-D-ribosyl)-5'-AMP + H2O = 1-(5-phospho-beta-D-ribosyl)-5-[(5-phospho-beta-D-ribosylamino)methylideneamino]imidazole-4-carboxamide. It participates in amino-acid biosynthesis; L-histidine biosynthesis; L-histidine from 5-phospho-alpha-D-ribose 1-diphosphate: step 2/9. It functions in the pathway amino-acid biosynthesis; L-histidine biosynthesis; L-histidine from 5-phospho-alpha-D-ribose 1-diphosphate: step 3/9. In Halalkalibacterium halodurans (strain ATCC BAA-125 / DSM 18197 / FERM 7344 / JCM 9153 / C-125) (Bacillus halodurans), this protein is Histidine biosynthesis bifunctional protein HisIE (hisI).